The sequence spans 396 residues: L-lactate dehydrogenase (396 aa).

Residues 1–380 (MIISAASDYR…TQDSLVQGLG (380 aa)) form the FMN hydroxy acid dehydrogenase domain. Tyr24 provides a ligand contact to substrate. FMN is bound by residues Ser106 and Gln127. Tyr129 lines the substrate pocket. An FMN-binding site is contributed by Thr155. A substrate-binding site is contributed by Arg164. Lys251 is a binding site for FMN. The Proton acceptor role is filled by His275. Arg278 contacts substrate. 306–330 (DSGIRNGLDVVRMIALGADTVLLGR) contacts FMN.

It belongs to the FMN-dependent alpha-hydroxy acid dehydrogenase family. It depends on FMN as a cofactor.

Its subcellular location is the cell inner membrane. The enzyme catalyses (S)-lactate + A = pyruvate + AH2. Its function is as follows. Catalyzes the conversion of L-lactate to pyruvate. Is coupled to the respiratory chain. This Escherichia coli O127:H6 (strain E2348/69 / EPEC) protein is L-lactate dehydrogenase.